The chain runs to 260 residues: Enoyl-[acyl-carrier-protein] reductase [NADH] FabI (260 aa).

NAD(+) is bound by residues G13, 19 to 20 (SI), Q40, 64 to 65 (DV), and I92. Active-site proton acceptor residues include Y146 and Y156. Residues K163 and 192 to 196 (IKTIS) contribute to the NAD(+) site.

Belongs to the short-chain dehydrogenases/reductases (SDR) family. FabI subfamily. Homotetramer.

The enzyme catalyses a 2,3-saturated acyl-[ACP] + NAD(+) = a (2E)-enoyl-[ACP] + NADH + H(+). The protein operates within lipid metabolism; fatty acid biosynthesis. Its pathway is cofactor biosynthesis; biotin biosynthesis. Its function is as follows. Catalyzes the reduction of a carbon-carbon double bond in an enoyl moiety that is covalently linked to an acyl carrier protein (ACP). Involved in the elongation cycle of fatty acid which are used in the lipid metabolism and in the biotin biosynthesis. In Buchnera aphidicola subsp. Acyrthosiphon pisum (strain APS) (Acyrthosiphon pisum symbiotic bacterium), this protein is Enoyl-[acyl-carrier-protein] reductase [NADH] FabI (fabI).